A 701-amino-acid chain; its full sequence is Elongation factor G (701 aa).

Residues 6 to 286 (KFTRNIGIAA…YVMELLPSPL (281 aa)) enclose the tr-type G domain. GTP-binding positions include 15-22 (AHIDAGKT), 83-87 (DTPGH), and 137-140 (NKMD).

This sequence belongs to the TRAFAC class translation factor GTPase superfamily. Classic translation factor GTPase family. EF-G/EF-2 subfamily.

Its subcellular location is the cytoplasm. Catalyzes the GTP-dependent ribosomal translocation step during translation elongation. During this step, the ribosome changes from the pre-translocational (PRE) to the post-translocational (POST) state as the newly formed A-site-bound peptidyl-tRNA and P-site-bound deacylated tRNA move to the P and E sites, respectively. Catalyzes the coordinated movement of the two tRNA molecules, the mRNA and conformational changes in the ribosome. The protein is Elongation factor G of Cytophaga hutchinsonii (strain ATCC 33406 / DSM 1761 / CIP 103989 / NBRC 15051 / NCIMB 9469 / D465).